Consider the following 135-residue polypeptide: ATP synthase epsilon chain, chloroplastic (135 aa).

The protein belongs to the ATPase epsilon chain family. In terms of assembly, F-type ATPases have 2 components, CF(1) - the catalytic core - and CF(0) - the membrane proton channel. CF(1) has five subunits: alpha(3), beta(3), gamma(1), delta(1), epsilon(1). CF(0) has three main subunits: a, b and c.

It is found in the plastid. It localises to the chloroplast thylakoid membrane. Functionally, produces ATP from ADP in the presence of a proton gradient across the membrane. The polypeptide is ATP synthase epsilon chain, chloroplastic (Marchantia polymorpha (Common liverwort)).